We begin with the raw amino-acid sequence, 350 residues long: MAEKLRVGIVGASGYGGVQLVRLLLDHPRVEIAYLGANQNAGTPFGELYPQLAHRIDRVCEAVELDRIVEACSVVFLATPNGIAHTLAPGLLAGGLRVFDLSADYRFVNLETYQSWYGGDRHDAAVAREAVYGLPELYRERIRTARLVGCPGCYPTASLLAAAPLLKQGLIDPRSLIIDAKSGVSGAGRALKTGSLFAEADSSVAAYSVARHRHIPEIEQVCSDLAGMRVQVQFTPHLIPMARGMLVTLYAQLRDPGLVSEDMLTIYEAFYRQAPAVRVLGSGIYPQTKWASGTNTCFIGLEVDQRTERVVVLSALDNLVKGQSGQAIQAMNLTQGWEEMLGLPAIGFYP.

Cys-153 is a catalytic residue.

It belongs to the NAGSA dehydrogenase family. Type 1 subfamily.

It is found in the cytoplasm. The enzyme catalyses N-acetyl-L-glutamate 5-semialdehyde + phosphate + NADP(+) = N-acetyl-L-glutamyl 5-phosphate + NADPH + H(+). The protein operates within amino-acid biosynthesis; L-arginine biosynthesis; N(2)-acetyl-L-ornithine from L-glutamate: step 3/4. In terms of biological role, catalyzes the NADPH-dependent reduction of N-acetyl-5-glutamyl phosphate to yield N-acetyl-L-glutamate 5-semialdehyde. This Gloeobacter violaceus (strain ATCC 29082 / PCC 7421) protein is N-acetyl-gamma-glutamyl-phosphate reductase.